A 141-amino-acid chain; its full sequence is Hemoglobin subunit alpha (141 aa).

Positions 1 to 141 constitute a Globin domain; it reads VLSSKDKANI…VSTVLTSKYR (141 aa). Ser-3 carries the post-translational modification Phosphoserine. N6-succinyllysine occurs at positions 7 and 11. Lys-16 carries the post-translational modification N6-acetyllysine; alternate. At Lys-16 the chain carries N6-succinyllysine; alternate. Tyr-24 carries the post-translational modification Phosphotyrosine. Lys-40 is modified (N6-succinyllysine). Ser-49 bears the Phosphoserine mark. Position 58 (His-58) interacts with O2. Heme b is bound at residue His-87. At Ser-102 the chain carries Phosphoserine. The residue at position 108 (Thr-108) is a Phosphothreonine. Ser-124 bears the Phosphoserine mark. Phosphothreonine occurs at positions 134 and 137. At Ser-138 the chain carries Phosphoserine.

This sequence belongs to the globin family. Heterotetramer of two alpha chains and two beta chains. As to expression, red blood cells.

Its function is as follows. Involved in oxygen transport from the lung to the various peripheral tissues. In terms of biological role, hemopressin acts as an antagonist peptide of the cannabinoid receptor CNR1. Hemopressin-binding efficiently blocks cannabinoid receptor CNR1 and subsequent signaling. The sequence is that of Hemoglobin subunit alpha (HBA) from Vicugna pacos (Alpaca).